The sequence spans 145 residues: Deoxyuridine 5'-triphosphate nucleotidohydrolase (145 aa).

Substrate is bound by residues 64-66, Asn-77, 81-83, and Met-91; these read RSG and TID.

Belongs to the dUTPase family. Mg(2+) is required as a cofactor.

The enzyme catalyses dUTP + H2O = dUMP + diphosphate + H(+). It functions in the pathway pyrimidine metabolism; dUMP biosynthesis; dUMP from dCTP (dUTP route): step 2/2. Its function is as follows. This enzyme is involved in nucleotide metabolism: it produces dUMP, the immediate precursor of thymidine nucleotides and it decreases the intracellular concentration of dUTP so that uracil cannot be incorporated into DNA. This is Deoxyuridine 5'-triphosphate nucleotidohydrolase from Leptospira borgpetersenii serovar Hardjo-bovis (strain JB197).